The sequence spans 431 residues: Serine--tRNA ligase (431 aa).

Positions 41 to 66 are disordered; it reads QSRTQELQAERNARSKSIGEAARRGE. L-serine is bound at residue 240–242; sequence TSE. 271-273 provides a ligand contact to ATP; it reads RSE. Glutamate 294 is an L-serine binding site. Position 358 to 361 (358 to 361) interacts with ATP; sequence EISS. Serine 392 is an L-serine binding site.

The protein belongs to the class-II aminoacyl-tRNA synthetase family. Type-1 seryl-tRNA synthetase subfamily. As to quaternary structure, homodimer. The tRNA molecule binds across the dimer.

Its subcellular location is the cytoplasm. It catalyses the reaction tRNA(Ser) + L-serine + ATP = L-seryl-tRNA(Ser) + AMP + diphosphate + H(+). It carries out the reaction tRNA(Sec) + L-serine + ATP = L-seryl-tRNA(Sec) + AMP + diphosphate + H(+). The protein operates within aminoacyl-tRNA biosynthesis; selenocysteinyl-tRNA(Sec) biosynthesis; L-seryl-tRNA(Sec) from L-serine and tRNA(Sec): step 1/1. In terms of biological role, catalyzes the attachment of serine to tRNA(Ser). Is also able to aminoacylate tRNA(Sec) with serine, to form the misacylated tRNA L-seryl-tRNA(Sec), which will be further converted into selenocysteinyl-tRNA(Sec). The sequence is that of Serine--tRNA ligase from Aeromonas hydrophila subsp. hydrophila (strain ATCC 7966 / DSM 30187 / BCRC 13018 / CCUG 14551 / JCM 1027 / KCTC 2358 / NCIMB 9240 / NCTC 8049).